A 65-amino-acid polypeptide reads, in one-letter code: Small ribosomal subunit protein bS21 (65 aa).

The disordered stretch occupies residues 43–65; the sequence is VDDRLKRARSKRRAQRANEESNA. Basic residues predominate over residues 48-57; the sequence is KRARSKRRAQ.

Belongs to the bacterial ribosomal protein bS21 family.

This is Small ribosomal subunit protein bS21 from Chloroherpeton thalassium (strain ATCC 35110 / GB-78).